Consider the following 51-residue polypeptide: Small integral membrane protein 38 (51 aa).

A helical transmembrane segment spans residues 13–33 (PLLALLVVILLARLILWSCLG).

It is found in the membrane. This chain is Small integral membrane protein 38, found in Homo sapiens (Human).